The chain runs to 61 residues: Large ribosomal subunit protein bL28 (61 aa).

Positions 1-26 are disordered; that stretch reads MAKDYVTGKRTHFGNTRSHALNHSRR.

It belongs to the bacterial ribosomal protein bL28 family.

This chain is Large ribosomal subunit protein bL28, found in Lactiplantibacillus plantarum (strain ATCC BAA-793 / NCIMB 8826 / WCFS1) (Lactobacillus plantarum).